The primary structure comprises 335 residues: Pyridoxal 5'-phosphate synthase subunit PdxS (335 aa).

D30 lines the D-ribose 5-phosphate pocket. K87 acts as the Schiff-base intermediate with D-ribose 5-phosphate in catalysis. G159 lines the D-ribose 5-phosphate pocket. Residue R171 participates in D-glyceraldehyde 3-phosphate binding. Residues G257 and 278–279 (GS) contribute to the D-ribose 5-phosphate site.

The protein belongs to the PdxS/SNZ family. In the presence of PdxT, forms a dodecamer of heterodimers.

It catalyses the reaction aldehydo-D-ribose 5-phosphate + D-glyceraldehyde 3-phosphate + L-glutamine = pyridoxal 5'-phosphate + L-glutamate + phosphate + 3 H2O + H(+). The protein operates within cofactor biosynthesis; pyridoxal 5'-phosphate biosynthesis. In terms of biological role, catalyzes the formation of pyridoxal 5'-phosphate from ribose 5-phosphate (RBP), glyceraldehyde 3-phosphate (G3P) and ammonia. The ammonia is provided by the PdxT subunit. Can also use ribulose 5-phosphate and dihydroxyacetone phosphate as substrates, resulting from enzyme-catalyzed isomerization of RBP and G3P, respectively. This Thermococcus onnurineus (strain NA1) protein is Pyridoxal 5'-phosphate synthase subunit PdxS.